A 323-amino-acid polypeptide reads, in one-letter code: NADH-ubiquinone oxidoreductase chain 1 (323 aa).

A run of 8 helical transmembrane segments spans residues 4 to 24 (LFTVLELLSFLVPVLLAVAFL), 73 to 93 (YLFFLSPLLFMALALLLWNLM), 106 to 126 (LLLVLGLSSLSVYAILGSGWA), 150 to 170 (LALILLSLIIITSSFNLTYIM), 175 to 195 (FSWFALSCLPLFYIWFVSTLA), 226 to 246 (LFFIAEYANIILMNLFSVVIF), 256 to 276 (LFPLNVLTIGLKTTLLVFLFL), and 303 to 323 (IGALCATITIVLTLGIYLPLF).

Belongs to the complex I subunit 1 family.

It localises to the mitochondrion inner membrane. It carries out the reaction a ubiquinone + NADH + 5 H(+)(in) = a ubiquinol + NAD(+) + 4 H(+)(out). Core subunit of the mitochondrial membrane respiratory chain NADH dehydrogenase (Complex I) that is believed to belong to the minimal assembly required for catalysis. Complex I functions in the transfer of electrons from NADH to the respiratory chain. The immediate electron acceptor for the enzyme is believed to be ubiquinone. This is NADH-ubiquinone oxidoreductase chain 1 (ND1) from Paracentrotus lividus (Common sea urchin).